The sequence spans 460 residues: Chromosomal replication initiator protein DnaA 1 (460 aa).

The segment at 1 to 68 (MRAWEEFLLL…KSGLVNNNNK (68 aa)) is domain I, interacts with DnaA modulators. Residues 68–102 (KPIRVHVTSVDKAAPFYKEKQMQQEKTAYFTMHYG) are domain II. The tract at residues 103-321 (SVNPEMTFSN…HALNLLAKRV (219 aa)) is domain III, AAA+ region. ATP-binding residues include glycine 151, glycine 153, lysine 154, and threonine 155. The domain IV, binds dsDNA stretch occupies residues 322–460 (MYKKLSHQLL…EFFPSEEMII (139 aa)).

It belongs to the DnaA family. Oligomerizes as a right-handed, spiral filament on DNA at oriC.

It localises to the cytoplasm. In terms of biological role, plays an essential role in the initiation and regulation of chromosomal replication. ATP-DnaA binds to the origin of replication (oriC) to initiate formation of the DNA replication initiation complex once per cell cycle. Binds the DnaA box (a 9 base pair repeat at the origin) and separates the double-stranded (ds)DNA. Forms a right-handed helical filament on oriC DNA; dsDNA binds to the exterior of the filament while single-stranded (ss)DNA is stabiized in the filament's interior. The ATP-DnaA-oriC complex binds and stabilizes one strand of the AT-rich DNA unwinding element (DUE), permitting loading of DNA polymerase. After initiation quickly degrades to an ADP-DnaA complex that is not apt for DNA replication. Binds acidic phospholipids. The sequence is that of Chromosomal replication initiator protein DnaA 1 from Chlamydia pneumoniae (Chlamydophila pneumoniae).